A 238-amino-acid chain; its full sequence is ATP synthase subunit a (238 aa).

5 consecutive transmembrane segments (helical) span residues 18 to 38 (LTLLAVCIVTIAIVFAFVFWA), 76 to 96 (YSLLLFTIFLFVAVANNLGLF), 114 to 134 (NLAFDLALSLFITLMVHIEGV), 166 to 186 (SLAIRLFGNIFAGEVVTGLIV), and 193 to 213 (VYWWPIAFLVNMAWTAFSVFI).

It belongs to the ATPase A chain family. F-type ATPases have 2 components, CF(1) - the catalytic core - and CF(0) - the membrane proton channel. CF(1) has five subunits: alpha(3), beta(3), gamma(1), delta(1), epsilon(1). CF(0) has three main subunits: a(1), b(2) and c(9-12). The alpha and beta chains form an alternating ring which encloses part of the gamma chain. CF(1) is attached to CF(0) by a central stalk formed by the gamma and epsilon chains, while a peripheral stalk is formed by the delta and b chains.

The protein localises to the cell membrane. Functionally, key component of the proton channel; it plays a direct role in the translocation of protons across the membrane. The chain is ATP synthase subunit a from Streptococcus pyogenes serotype M1.